A 732-amino-acid polypeptide reads, in one-letter code: Catalase-peroxidase (732 aa).

Positions tryptophan 97–tyrosine 220 form a cross-link, tryptophyl-tyrosyl-methioninium (Trp-Tyr) (with M-246). Histidine 98 functions as the Proton acceptor in the catalytic mechanism. Positions tyrosine 220–methionine 246 form a cross-link, tryptophyl-tyrosyl-methioninium (Tyr-Met) (with W-97). Histidine 261 contacts heme b.

It belongs to the peroxidase family. Peroxidase/catalase subfamily. Homodimer or homotetramer. Requires heme b as cofactor. Post-translationally, formation of the three residue Trp-Tyr-Met cross-link is important for the catalase, but not the peroxidase activity of the enzyme.

The enzyme catalyses H2O2 + AH2 = A + 2 H2O. The catalysed reaction is 2 H2O2 = O2 + 2 H2O. Bifunctional enzyme with both catalase and broad-spectrum peroxidase activity. This is Catalase-peroxidase from Chlorobium phaeobacteroides (strain BS1).